A 507-amino-acid polypeptide reads, in one-letter code: tRNA (guanine(10)-N(2))-methyltransferase TRMT11 (507 aa).

Residues 459-475 (EKTKKKEQKKKSVENHL) are compositionally biased toward basic and acidic residues. Residues 459–507 (EKTKKKEQKKKSVENHLKSKNNNDVINNNSNDTNSNNNCNNENNIENQK) form a disordered region. The segment covering 480-507 (NNDVINNNSNDTNSNNNCNNENNIENQK) has biased composition (low complexity).

It belongs to the class I-like SAM-binding methyltransferase superfamily. TRM11 methyltransferase family. Part of the heterodimeric TRMT11-TRM112 methyltransferase complex; this complex forms an active tRNA methyltransferase, where TRMT112 acts as an activator of the catalytic subunit TRMT11.

The protein localises to the cytoplasm. It carries out the reaction guanosine(10) in tRNA + S-adenosyl-L-methionine = N(2)-methylguanosine(10) in tRNA + S-adenosyl-L-homocysteine + H(+). In terms of biological role, catalytic subunit of the TRMT11-TRM112 methyltransferase complex, that specifically mediates the S-adenosyl-L-methionine-dependent N(2)-methylation of guanosine nucleotide at position 10 (m2G10) in tRNAs. This is one of the major tRNA (guanine-N(2))-methyltransferases. This Dictyostelium discoideum (Social amoeba) protein is tRNA (guanine(10)-N(2))-methyltransferase TRMT11 (trmt11).